The sequence spans 412 residues: Major facilitator superfamily domain-containing protein 3 (412 aa).

Transmembrane regions (helical) follow at residues 10–30 (GLYLVQGLPYGLQSSLLPILL), 40–60 (VGLTKGLYAPWLLKLAWAPLV), 68–88 (VWLTLSTLSLGLVCGLLAVLP), 99–119 (TTVMGLLLLLNLGAAVQDVAL), 152–172 (GGLLVLFPTLSWPLLFLLLAA), 173–193 (TYWLAAALAWAAPALGRLPWP), 204–224 (YLLQDLLAVPGTLWTAGFVLT), 252–272 (LWSGLGAVTCSIAGSSLGGAL), 291–311 (LGSLACQTALLFHLNSPGASV), 320–340 (AVLLSLCLQQFFGGVVTTATF), 361–381 (FLATLELLGKLLLGTLAGVLA), and 384–404 (LGPHLCFAVFLVLSALPVLDL).

This sequence belongs to the major facilitator superfamily. In terms of tissue distribution, in brain, expressed in the cortex, striatum, hippocampus, hypothalamus, thalamus and cerebellum (at protein level). Widely expressed with highest levels in kidney and liver.

The protein resides in the membrane. The chain is Major facilitator superfamily domain-containing protein 3 (Mfsd3) from Mus musculus (Mouse).